A 1117-amino-acid chain; its full sequence is Lid2 complex component snt2 (1117 aa).

Positions 89-208 (ELIQPNDFVL…QNINKVFDVV (120 aa)) constitute a BAH domain. Residues 227–282 (NYDFIVTEYGKGRALLNEPSNCKVCKKWCAFDFSVQCADCKKYYHMDCVVPPLLKK) form a Phorbol-ester/DAG-type zinc finger. The PHD-type 1 zinc finger occupies 245–297 (PSNCKVCKKWCAFDFSVQCADCKKYYHMDCVVPPLLKKPPHGFGWTCATCSFA). Residues 361–380 (SSRNLHQQSRKSLDENKPNS) form a disordered region. Residues 798–882 (KKCCALCGIV…SWACLSCRSN (85 aa)) form a PHD-type 2 zinc finger. The C2HC pre-PHD-type zinc finger occupies 890–925 (DNHCVLCLQSASHSLMKKTVEGNWVHLICASWTPDV). A PHD-type 3; degenerate zinc finger spans residues 948–1002 (KKCEVCGNSFGVCVSSPNSGLTSHVTCAEKANWYLGFEFVKQDQSPFSMLSNLKS).

As to quaternary structure, component of the Lid2 complex composed of ash2, jmj3, lid2, sdc1 and snt2.

Its subcellular location is the nucleus. The polypeptide is Lid2 complex component snt2 (snt2) (Schizosaccharomyces pombe (strain 972 / ATCC 24843) (Fission yeast)).